Consider the following 86-residue polypeptide: uncharacterized protein (86 aa).

2 helical membrane-spanning segments follow: residues 21–43 (VFWV…EATA) and 53–75 (FWYA…YFYF).

It localises to the cell membrane. This is an uncharacterized protein from Archaeoglobus fulgidus (strain ATCC 49558 / DSM 4304 / JCM 9628 / NBRC 100126 / VC-16).